A 128-amino-acid polypeptide reads, in one-letter code: Holo-[acyl-carrier-protein] synthase (128 aa).

Residues aspartate 8 and glutamate 60 each contribute to the Mg(2+) site.

Belongs to the P-Pant transferase superfamily. AcpS family. Mg(2+) is required as a cofactor.

It localises to the cytoplasm. The enzyme catalyses apo-[ACP] + CoA = holo-[ACP] + adenosine 3',5'-bisphosphate + H(+). Transfers the 4'-phosphopantetheine moiety from coenzyme A to a Ser of acyl-carrier-protein. The protein is Holo-[acyl-carrier-protein] synthase of Anaeromyxobacter dehalogenans (strain 2CP-1 / ATCC BAA-258).